Here is a 242-residue protein sequence, read N- to C-terminus: Phosphoribosylaminoimidazole-succinocarboxamide synthase (242 aa).

Belongs to the SAICAR synthetase family.

It catalyses the reaction 5-amino-1-(5-phospho-D-ribosyl)imidazole-4-carboxylate + L-aspartate + ATP = (2S)-2-[5-amino-1-(5-phospho-beta-D-ribosyl)imidazole-4-carboxamido]succinate + ADP + phosphate + 2 H(+). Its pathway is purine metabolism; IMP biosynthesis via de novo pathway; 5-amino-1-(5-phospho-D-ribosyl)imidazole-4-carboxamide from 5-amino-1-(5-phospho-D-ribosyl)imidazole-4-carboxylate: step 1/2. This is Phosphoribosylaminoimidazole-succinocarboxamide synthase from Magnetococcus marinus (strain ATCC BAA-1437 / JCM 17883 / MC-1).